The following is a 175-amino-acid chain: MLLSTSFLLAGHFGFNTNLLETNVLNLAVVLAIVLTYVGDALRGLLANRKQSILTNFREADQRATEAQNKLREAQLELEQAQAKAQKIREQANVTIEQEKKQFIRQTQEDIKRLGTLQQETLKFEQQKAQNELAEKLVKLALQQVREKLNQRLTSSIHSAVNNFQIVLFTNSKAS.

Residues Val24 to Leu46 form a helical membrane-spanning segment.

This sequence belongs to the ATPase B chain family. In terms of assembly, F-type ATPases have 2 components, F(1) - the catalytic core - and F(0) - the membrane proton channel. F(1) has five subunits: alpha(3), beta(3), gamma(1), delta(1), epsilon(1). F(0) has four main subunits: a(1), b(1), b'(1) and c(10-14). The alpha and beta chains form an alternating ring which encloses part of the gamma chain. F(1) is attached to F(0) by a central stalk formed by the gamma and epsilon chains, while a peripheral stalk is formed by the delta, b and b' chains.

The protein localises to the plastid. It localises to the chloroplast thylakoid membrane. In terms of biological role, f(1)F(0) ATP synthase produces ATP from ADP in the presence of a proton or sodium gradient. F-type ATPases consist of two structural domains, F(1) containing the extramembraneous catalytic core and F(0) containing the membrane proton channel, linked together by a central stalk and a peripheral stalk. During catalysis, ATP synthesis in the catalytic domain of F(1) is coupled via a rotary mechanism of the central stalk subunits to proton translocation. Its function is as follows. Component of the F(0) channel, it forms part of the peripheral stalk, linking F(1) to F(0). This chain is ATP synthase subunit b, chloroplastic, found in Chlorella vulgaris (Green alga).